The sequence spans 962 residues: Leucine--tRNA ligase (962 aa).

The short motif at 68–79 (PYPSGAGLHVGH) is the 'HIGH' region element. The interval 559–582 (DYSPRTFDPDDANTSPETPLSRNE) is disordered. Polar residues predominate over residues 570–579 (ANTSPETPLS). The 'KMSKS' region signature appears at 733–737 (KMGKS). Residue Lys736 participates in ATP binding.

The protein belongs to the class-I aminoacyl-tRNA synthetase family.

The protein localises to the cytoplasm. The catalysed reaction is tRNA(Leu) + L-leucine + ATP = L-leucyl-tRNA(Leu) + AMP + diphosphate. The chain is Leucine--tRNA ligase from Streptomyces avermitilis (strain ATCC 31267 / DSM 46492 / JCM 5070 / NBRC 14893 / NCIMB 12804 / NRRL 8165 / MA-4680).